The primary structure comprises 529 residues: Bifunctional purine biosynthesis protein PurH (529 aa).

The MGS-like domain occupies Met-1–Thr-148.

The protein belongs to the PurH family.

The enzyme catalyses (6R)-10-formyltetrahydrofolate + 5-amino-1-(5-phospho-beta-D-ribosyl)imidazole-4-carboxamide = 5-formamido-1-(5-phospho-D-ribosyl)imidazole-4-carboxamide + (6S)-5,6,7,8-tetrahydrofolate. It catalyses the reaction IMP + H2O = 5-formamido-1-(5-phospho-D-ribosyl)imidazole-4-carboxamide. Its pathway is purine metabolism; IMP biosynthesis via de novo pathway; 5-formamido-1-(5-phospho-D-ribosyl)imidazole-4-carboxamide from 5-amino-1-(5-phospho-D-ribosyl)imidazole-4-carboxamide (10-formyl THF route): step 1/1. The protein operates within purine metabolism; IMP biosynthesis via de novo pathway; IMP from 5-formamido-1-(5-phospho-D-ribosyl)imidazole-4-carboxamide: step 1/1. The protein is Bifunctional purine biosynthesis protein PurH of Buchnera aphidicola subsp. Baizongia pistaciae (strain Bp).